Consider the following 513-residue polypeptide: Beta-glucosidase 5 (513 aa).

Residues 1 to 26 form the signal peptide; that stretch reads MAAAIAVVYLSLLLLLLHGAAPAVLG. Gln-46 is a binding site for a beta-D-glucoside. Residue Glu-192 is the Proton donor of the active site. Cys-211 and Cys-220 are disulfide-bonded. Residues Asn-224 and Asn-273 are each glycosylated (N-linked (GlcNAc...) asparagine). Residues Tyr-336 and Glu-405 each contribute to the a beta-D-glucoside site. Catalysis depends on Glu-405, which acts as the Nucleophile. An N-linked (GlcNAc...) asparagine glycan is attached at Asn-412. A beta-D-glucoside is bound by residues Trp-447, 454–455, and Tyr-463; that span reads EY.

It belongs to the glycosyl hydrolase 1 family.

It carries out the reaction Hydrolysis of terminal, non-reducing beta-D-glucosyl residues with release of beta-D-glucose.. The chain is Beta-glucosidase 5 (BGLU5) from Oryza sativa subsp. japonica (Rice).